The sequence spans 254 residues: 3-deoxy-manno-octulosonate cytidylyltransferase (254 aa).

The protein belongs to the KdsB family.

It is found in the cytoplasm. It catalyses the reaction 3-deoxy-alpha-D-manno-oct-2-ulosonate + CTP = CMP-3-deoxy-beta-D-manno-octulosonate + diphosphate. It functions in the pathway nucleotide-sugar biosynthesis; CMP-3-deoxy-D-manno-octulosonate biosynthesis; CMP-3-deoxy-D-manno-octulosonate from 3-deoxy-D-manno-octulosonate and CTP: step 1/1. Its pathway is bacterial outer membrane biogenesis; lipopolysaccharide biosynthesis. Functionally, activates KDO (a required 8-carbon sugar) for incorporation into bacterial lipopolysaccharide in Gram-negative bacteria. The protein is 3-deoxy-manno-octulosonate cytidylyltransferase of Polynucleobacter asymbioticus (strain DSM 18221 / CIP 109841 / QLW-P1DMWA-1) (Polynucleobacter necessarius subsp. asymbioticus).